Reading from the N-terminus, the 364-residue chain is Myeloid cell surface antigen CD33 (364 aa).

The first 17 residues, 1–17 (MPLLLLLPLLWAGALAM), serve as a signal peptide directing secretion. Residues 18–259 (DPNFWLQVQE…KQETRAGVVH (242 aa)) lie on the Extracellular side of the membrane. The Ig-like V-type domain occupies 19 to 135 (PNFWLQVQES…KYSYKSPQLS (117 aa)). 3 disulfide bridges follow: cysteine 36/cysteine 169, cysteine 41/cysteine 101, and cysteine 163/cysteine 212. 2 N-linked (GlcNAc...) asparagine glycosylation sites follow: asparagine 100 and asparagine 113. Arginine 119 is an N-acetylneuraminate binding site. The Ig-like C2-type domain maps to 145–228 (PKILIPGTLE…AGVTTERTIQ (84 aa)). A D-galactose-binding site is contributed by glutamate 154. Asparagine 160, asparagine 209, and asparagine 230 each carry an N-linked (GlcNAc...) asparagine glycan. The chain crosses the membrane as a helical span at residues 260–282 (GAIGGAGVTALLALCLCLIFFIV). At 283–364 (KTHRRKAART…STEYSEVRTQ (82 aa)) the chain is on the cytoplasmic side. Residues 290-364 (ARTAVGRNDT…STEYSEVRTQ (75 aa)) are disordered. Short sequence motifs (ITIM motif) lie at residues 338–343 (LHYASL) and 356–361 (TEYSEV). Tyrosine 340 and tyrosine 358 each carry phosphotyrosine; by LCK.

This sequence belongs to the immunoglobulin superfamily. SIGLEC (sialic acid binding Ig-like lectin) family. Homodimer; disulfide-linked. Interacts with PTPN6/SHP-1 and PTPN11/SHP-2 upon phosphorylation. Interacts with C1QA (via C-terminus); this interaction activates CD33 inhibitory motifs. Glycosylated. Glycosylation at Asn-100 is critical for regulating ligand recognition. Post-translationally, phosphorylation of Tyr-340 is involved in binding to PTPN6 and PTPN11. Phosphorylation of Tyr-358 is involved in binding to PTPN6. LCK phosphorylates Tyr-340 efficiently and Tyr-358 to a lesser extent. As to expression, monocytic/myeloid lineage cells. In the brain, CD33 is mainly expressed on microglial cells.

It localises to the cell membrane. The protein resides in the peroxisome. Its function is as follows. Sialic-acid-binding immunoglobulin-like lectin (Siglec) that plays a role in mediating cell-cell interactions and in maintaining immune cells in a resting state. Preferentially recognizes and binds alpha-2,3- and more avidly alpha-2,6-linked sialic acid-bearing glycans. Upon engagement of ligands such as C1q or syalylated glycoproteins, two immunoreceptor tyrosine-based inhibitory motifs (ITIMs) located in CD33 cytoplasmic tail are phosphorylated by Src-like kinases such as LCK. These phosphorylations provide docking sites for the recruitment and activation of protein-tyrosine phosphatases PTPN6/SHP-1 and PTPN11/SHP-2. In turn, these phosphatases regulate downstream pathways through dephosphorylation of signaling molecules. One of the repressive effect of CD33 on monocyte activation requires phosphoinositide 3-kinase/PI3K. The polypeptide is Myeloid cell surface antigen CD33 (CD33) (Homo sapiens (Human)).